The following is a 177-amino-acid chain: Translation initiation factor IF-3 (177 aa).

It belongs to the IF-3 family. In terms of assembly, monomer.

It is found in the cytoplasm. IF-3 binds to the 30S ribosomal subunit and shifts the equilibrium between 70S ribosomes and their 50S and 30S subunits in favor of the free subunits, thus enhancing the availability of 30S subunits on which protein synthesis initiation begins. In Nostoc sp. (strain PCC 7120 / SAG 25.82 / UTEX 2576), this protein is Translation initiation factor IF-3.